A 470-amino-acid chain; its full sequence is Cell division protein FtsP (470 aa).

The tat-type signal signal peptide spans methionine 1–alanine 29.

The protein belongs to the FtsP family. In terms of processing, predicted to be exported by the Tat system. The position of the signal peptide cleavage has not been experimentally proven.

It localises to the periplasm. Functionally, cell division protein that is required for growth during stress conditions. May be involved in protecting or stabilizing the divisomal assembly under conditions of stress. This Aggregatibacter aphrophilus (strain NJ8700) (Haemophilus aphrophilus) protein is Cell division protein FtsP.